The primary structure comprises 185 residues: HTH-type transcriptional regulator SAR2658 (185 aa).

Positions 6–66 constitute an HTH tetR-type domain; sequence KENRQRIEEI…YVIQRDLDIF (61 aa). A DNA-binding region (H-T-H motif) is located at residues 29–48; the sequence is SMNRIAKELGIGMGTLYRHF.

In Staphylococcus aureus (strain MRSA252), this protein is HTH-type transcriptional regulator SAR2658.